Here is an 831-residue protein sequence, read N- to C-terminus: Periplasmic nitrate reductase (831 aa).

A signal peptide (tat-type signal) is located at residues 1-29 (MTLTRRDLIKAQAAATAAAAAGLPVSALA). A 4Fe-4S Mo/W bis-MGD-type domain is found at 41-97 (IRWSKAPCRFCGTGCGVMVGTRDGQVVATHGDTQAEVNRGLNCVKGYFLSKIMYGED). Positions 48, 51, 55, and 83 each coordinate [4Fe-4S] cluster. Residues lysine 85, glutamine 152, asparagine 177, cysteine 181, 214 to 221 (WGSNMAEM), 245 to 249 (STFTH), 264 to 266 (GTD), methionine 375, glutamine 379, asparagine 485, 511 to 512 (SD), lysine 534, aspartate 561, and 721 to 730 (TGRVLEHWHS) contribute to the Mo-bis(molybdopterin guanine dinucleotide) site. Tryptophan 797 is a binding site for substrate. Mo-bis(molybdopterin guanine dinucleotide) is bound by residues asparagine 805 and lysine 822.

The protein belongs to the prokaryotic molybdopterin-containing oxidoreductase family. NasA/NapA/NarB subfamily. Component of the periplasmic nitrate reductase NapAB complex composed of NapA and NapB. It depends on [4Fe-4S] cluster as a cofactor. Mo-bis(molybdopterin guanine dinucleotide) serves as cofactor. Predicted to be exported by the Tat system. The position of the signal peptide cleavage has not been experimentally proven.

It localises to the periplasm. It catalyses the reaction 2 Fe(II)-[cytochrome] + nitrate + 2 H(+) = 2 Fe(III)-[cytochrome] + nitrite + H2O. Functionally, catalytic subunit of the periplasmic nitrate reductase complex NapAB. Receives electrons from NapB and catalyzes the reduction of nitrate to nitrite. This Cereibacter sphaeroides (strain ATCC 17023 / DSM 158 / JCM 6121 / CCUG 31486 / LMG 2827 / NBRC 12203 / NCIMB 8253 / ATH 2.4.1.) (Rhodobacter sphaeroides) protein is Periplasmic nitrate reductase.